We begin with the raw amino-acid sequence, 330 residues long: Fructose-1,6-bisphosphatase class 1 (330 aa).

Positions 84, 103, 105, and 106 each coordinate Mg(2+). Residues 106–109 (DGSS), Asn196, and Lys262 contribute to the substrate site. A Mg(2+)-binding site is contributed by Glu268.

It belongs to the FBPase class 1 family. In terms of assembly, homotetramer. Requires Mg(2+) as cofactor.

It localises to the cytoplasm. The catalysed reaction is beta-D-fructose 1,6-bisphosphate + H2O = beta-D-fructose 6-phosphate + phosphate. The protein operates within carbohydrate biosynthesis; gluconeogenesis. The chain is Fructose-1,6-bisphosphatase class 1 from Shewanella frigidimarina (strain NCIMB 400).